The sequence spans 213 residues: Pyrrolidone-carboxylate peptidase (213 aa).

Active-site residues include glutamate 78, cysteine 141, and histidine 165.

It belongs to the peptidase C15 family. Homotetramer.

It localises to the cytoplasm. It catalyses the reaction Release of an N-terminal pyroglutamyl group from a polypeptide, the second amino acid generally not being Pro.. Its function is as follows. Removes 5-oxoproline from various penultimate amino acid residues except L-proline. The chain is Pyrrolidone-carboxylate peptidase from Clostridium perfringens (strain SM101 / Type A).